Here is a 165-residue protein sequence, read N- to C-terminus: Interferon gamma (165 aa).

Positions 1-23 are cleaved as a signal peptide; that stretch reads MKYTSYILAFQLCIVLGSLGCYC. Glutamine 24 is modified (pyrrolidone carboxylic acid). 2 N-linked (GlcNAc...) asparagine glycosylation sites follow: asparagine 48 and asparagine 120.

The protein belongs to the type II (or gamma) interferon family. As to quaternary structure, homodimer. Interacts with IFNGR1 (via extracellular domain); this interaction promotes IFNGR1 dimerization. As to expression, released primarily from activated T lymphocytes.

Its subcellular location is the secreted. In terms of biological role, type II interferon produced by immune cells such as T-cells and NK cells that plays crucial roles in antimicrobial, antiviral, and antitumor responses by activating effector immune cells and enhancing antigen presentation. Primarily signals through the JAK-STAT pathway after interaction with its receptor IFNGR1 to affect gene regulation. Upon IFNG binding, IFNGR1 intracellular domain opens out to allow association of downstream signaling components JAK2, JAK1 and STAT1, leading to STAT1 activation, nuclear translocation and transcription of IFNG-regulated genes. Many of the induced genes are transcription factors such as IRF1 that are able to further drive regulation of a next wave of transcription. Plays a role in class I antigen presentation pathway by inducing a replacement of catalytic proteasome subunits with immunoproteasome subunits. In turn, increases the quantity, quality, and repertoire of peptides for class I MHC loading. Increases the efficiency of peptide generation also by inducing the expression of activator PA28 that associates with the proteasome and alters its proteolytic cleavage preference. Up-regulates as well MHC II complexes on the cell surface by promoting expression of several key molecules such as cathepsins B/CTSB, H/CTSH, and L/CTSL. Participates in the regulation of hematopoietic stem cells during development and under homeostatic conditions by affecting their development, quiescence, and differentiation. The polypeptide is Interferon gamma (IFNG) (Cercocebus atys (Sooty mangabey)).